Reading from the N-terminus, the 99-residue chain is MSEIIRQVMISGRVQGVGYRAWLAHTAEAMGLHGWVRNRRDGSVEAVLAGSEPIVSEMIARCQRGPSAARVEAVVAEIAQPDVLNLRQPGERFSILSTL.

In terms of domain architecture, Acylphosphatase-like spans 5 to 97 (IRQVMISGRV…QPGERFSILS (93 aa)). Catalysis depends on residues Arg20 and Asn38.

This sequence belongs to the acylphosphatase family.

It catalyses the reaction an acyl phosphate + H2O = a carboxylate + phosphate + H(+). The polypeptide is Acylphosphatase (acyP) (Rhodopseudomonas palustris (strain ATCC BAA-98 / CGA009)).